The sequence spans 254 residues: Peroxisomal membrane protein 11-2 (254 aa).

Residues 1–113 (MVTAAGSPSS…YHPHPHVHPL (113 aa)) lie on the Cytoplasmic side of the membrane. Residues 114–134 (LVLLAYGGQGVYNFLEQFAWL) traverse the membrane as a helical segment. The Lumenal portion of the chain corresponds to 135–227 (AKAGLLPARL…TVGDVTGRKG (93 aa)). The chain crosses the membrane as a helical span at residues 228–247 (LLGSSTLMASAGLLSALISV). At 248 to 254 (HKNWNSC) the chain is on the cytoplasmic side.

Belongs to the peroxin-11 family.

Its subcellular location is the peroxisome membrane. In terms of biological role, involved in peroxisomal proliferation. This chain is Peroxisomal membrane protein 11-2 (PEX11-2), found in Oryza sativa subsp. japonica (Rice).